We begin with the raw amino-acid sequence, 421 residues long: UDP-N-acetylglucosamine 1-carboxyvinyltransferase (421 aa).

Phosphoenolpyruvate is bound at residue 22-23 (KN). Arg-93 contacts UDP-N-acetyl-alpha-D-glucosamine. Cys-117 acts as the Proton donor in catalysis. Cys-117 is modified (2-(S-cysteinyl)pyruvic acid O-phosphothioketal). UDP-N-acetyl-alpha-D-glucosamine contacts are provided by residues 122-126 (RPVDL), Asp-308, and Leu-330.

It belongs to the EPSP synthase family. MurA subfamily.

It is found in the cytoplasm. It catalyses the reaction phosphoenolpyruvate + UDP-N-acetyl-alpha-D-glucosamine = UDP-N-acetyl-3-O-(1-carboxyvinyl)-alpha-D-glucosamine + phosphate. Its pathway is cell wall biogenesis; peptidoglycan biosynthesis. Cell wall formation. Adds enolpyruvyl to UDP-N-acetylglucosamine. In Helicobacter hepaticus (strain ATCC 51449 / 3B1), this protein is UDP-N-acetylglucosamine 1-carboxyvinyltransferase.